A 178-amino-acid polypeptide reads, in one-letter code: Translation initiation factor IF-3 (178 aa).

Belongs to the IF-3 family. As to quaternary structure, monomer.

It localises to the cytoplasm. IF-3 binds to the 30S ribosomal subunit and shifts the equilibrium between 70S ribosomes and their 50S and 30S subunits in favor of the free subunits, thus enhancing the availability of 30S subunits on which protein synthesis initiation begins. This chain is Translation initiation factor IF-3, found in Ureaplasma parvum serovar 3 (strain ATCC 700970).